Here is a 242-residue protein sequence, read N- to C-terminus: GLIPR1-like protein 1 (242 aa).

The signal sequence occupies residues 1–22 (MALKNKFSCLWILGLCLVATTS). The 133-residue stretch at 39–171 (EAHNEWRGKV…ASTAIFVCNY (133 aa)) folds into the SCP domain. Asn-119 carries an N-linked (GlcNAc...) asparagine glycan. Gly-221 carries the GPI-anchor amidated glycine lipid modification. Positions 222–242 (RAPQQTAFNPFSLGFLLLRIF) are cleaved as a propeptide — removed in mature form.

It belongs to the CRISP family. In terms of assembly, part of a oolemmal binding multimeric complex (IZUMO1 complex) composed at least of IZUMO1 and GLIPR1L1; the complex assemblage is influenced by the maturation status of the male germ cell. Interacts with IZUMO1. In terms of processing, N-glycosylated. N-glycosylation decreases during the transit in the caput. As to expression, highly expressed in testis.

It is found in the cytoplasmic vesicle. The protein resides in the secretory vesicle. Its subcellular location is the acrosome. It localises to the cell membrane. The protein localises to the membrane raft. It is found in the secreted. Its function is as follows. Required for optimal fertilization at the stage of sperm-oocyte fusion, plays a role in optimizing acrosome function, the translocation of IZUMO1 during the acrosome reaction and the fertilization process. Component of epididymosomes, one type of membranous microvesicules which mediate the transfer of lipids and proteins to spermatozoa plasma membrane during epididymal maturation. Also component of the CD9-positive microvesicules found in the cauda region. The protein is GLIPR1-like protein 1 (GLIPR1L1) of Homo sapiens (Human).